The chain runs to 129 residues: Small ribosomal subunit protein uS11 (129 aa).

This sequence belongs to the universal ribosomal protein uS11 family. As to quaternary structure, part of the 30S ribosomal subunit. Interacts with proteins S7 and S18. Binds to IF-3.

In terms of biological role, located on the platform of the 30S subunit, it bridges several disparate RNA helices of the 16S rRNA. Forms part of the Shine-Dalgarno cleft in the 70S ribosome. The protein is Small ribosomal subunit protein uS11 of Lysinibacillus sphaericus (strain C3-41).